We begin with the raw amino-acid sequence, 504 residues long: Ribose import ATP-binding protein RbsA 3 (504 aa).

2 ABC transporter domains span residues Ala6–Pro238 and Ile251–Gly494. An ATP-binding site is contributed by Gly38 to Ser45.

The protein belongs to the ABC transporter superfamily. Ribose importer (TC 3.A.1.2.1) family. As to quaternary structure, the complex is composed of an ATP-binding protein (RbsA), two transmembrane proteins (RbsC) and a solute-binding protein (RbsB).

The protein localises to the cell inner membrane. It catalyses the reaction D-ribose(out) + ATP + H2O = D-ribose(in) + ADP + phosphate + H(+). Part of the ABC transporter complex RbsABC involved in ribose import. Responsible for energy coupling to the transport system. This is Ribose import ATP-binding protein RbsA 3 from Rhizobium meliloti (strain 1021) (Ensifer meliloti).